A 272-amino-acid chain; its full sequence is Ribonuclease HII (272 aa).

Positions Gly30–Val221 constitute an RNase H type-2 domain. A divalent metal cation-binding residues include Asp36, Glu37, and Asp130.

The protein belongs to the RNase HII family. It depends on Mn(2+) as a cofactor. Mg(2+) serves as cofactor.

It localises to the cytoplasm. It carries out the reaction Endonucleolytic cleavage to 5'-phosphomonoester.. Functionally, endonuclease that specifically degrades the RNA of RNA-DNA hybrids. This Mycolicibacterium smegmatis (strain ATCC 700084 / mc(2)155) (Mycobacterium smegmatis) protein is Ribonuclease HII.